Reading from the N-terminus, the 458-residue chain is Elongation factor 1-alpha 1 (458 aa).

Position 2 is a n,N,N-trimethylglycine (Gly2). Lys3 carries the N6,N6-dimethyllysine; alternate modification. Position 3 is an N6-methyllysine; alternate (Lys3). The region spanning 5 to 240 is the tr-type G domain; sequence KTHVNVVVIG…DAIEPPTRPT (236 aa). The G1 stretch occupies residues 14-21; that stretch reads GHVDSGKS. 14–21 is a binding site for GTP; sequence GHVDSGKS. Lys30 carries the post-translational modification N6-methyllysine. Residues 70–74 form a G2 region; the sequence is GITID. Lys79 carries the post-translational modification N6,N6,N6-trimethyllysine. The G3 stretch occupies residues 91 to 94; the sequence is DAPG. Residues 91–95 and 153–156 contribute to the GTP site; these read DAPGH and NKMD. The tract at residues 153 to 156 is G4; it reads NKMD. The interval 192-194 is G5; the sequence is SGW. N6,N6-dimethyllysine; alternate is present on Lys316. Lys316 carries the N6-methyllysine; alternate modification. Lys390 carries the post-translational modification N6-methyllysine.

Belongs to the TRAFAC class translation factor GTPase superfamily. Classic translation factor GTPase family. EF-Tu/EF-1A subfamily.

Its subcellular location is the cytoplasm. Its function is as follows. This protein promotes the GTP-dependent binding of aminoacyl-tRNA to the A-site of ribosomes during protein biosynthesis. This chain is Elongation factor 1-alpha 1 (TEF1), found in Candida albicans (strain SC5314 / ATCC MYA-2876) (Yeast).